A 410-amino-acid chain; its full sequence is Arginine biosynthesis bifunctional protein ArgJ (410 aa).

Residues Thr-160, Lys-186, Thr-197, Glu-283, Asn-405, and Thr-410 each coordinate substrate. Thr-197 serves as the catalytic Nucleophile.

The protein belongs to the ArgJ family. In terms of assembly, heterotetramer of two alpha and two beta chains.

Its subcellular location is the cytoplasm. The enzyme catalyses N(2)-acetyl-L-ornithine + L-glutamate = N-acetyl-L-glutamate + L-ornithine. It carries out the reaction L-glutamate + acetyl-CoA = N-acetyl-L-glutamate + CoA + H(+). It functions in the pathway amino-acid biosynthesis; L-arginine biosynthesis; L-ornithine and N-acetyl-L-glutamate from L-glutamate and N(2)-acetyl-L-ornithine (cyclic): step 1/1. Its pathway is amino-acid biosynthesis; L-arginine biosynthesis; N(2)-acetyl-L-ornithine from L-glutamate: step 1/4. Its activity is regulated as follows. Competitively inhibited by L-ornithine. Functionally, catalyzes two activities which are involved in the cyclic version of arginine biosynthesis: the synthesis of N-acetylglutamate from glutamate and acetyl-CoA as the acetyl donor, and of ornithine by transacetylation between N(2)-acetylornithine and glutamate. The polypeptide is Arginine biosynthesis bifunctional protein ArgJ (Geobacillus stearothermophilus (Bacillus stearothermophilus)).